A 712-amino-acid chain; its full sequence is Rap1 GTPase-activating protein 2 (712 aa).

The interval 1–33 (MLAGLKVKKQELANSSDVTLPDRPLSPPLTAPP) is disordered. Serine 26 carries the phosphoserine modification. A Phosphothreonine modification is found at threonine 30. The Rap-GAP domain occupies 229-445 (IVSYDEHDVN…RTRAALLDNL (217 aa)). A phosphoserine mark is found at serine 488, serine 495, serine 525, serine 539, serine 545, serine 593, and serine 594. Positions 529–712 (AAATAKNQSR…LSHASSSAGH (184 aa)) are disordered. The span at 566–594 (DSASSTPKTPDGGHSSQEIKSETSSNPSS) shows a compositional bias: polar residues. Residues 599–612 (PNKEKPFIKLKENG) are compositionally biased toward basic and acidic residues. The span at 617–629 (SRSSSSTSSFSST) shows a compositional bias: low complexity. A compositionally biased stretch (polar residues) spans 641 to 652 (SGSSQPSTTSPF). The segment covering 660–669 (SPSPSSESPS) has biased composition (low complexity). Residues 681 to 694 (RSPTDAKSRNSPRS) show a composition bias toward polar residues.

It is found in the cytoplasm. Functionally, GTPase activator for the nuclear Ras-related regulatory protein RAP-1A (KREV-1), converting it to the putatively inactive GDP-bound state. The polypeptide is Rap1 GTPase-activating protein 2 (Rap1gap2) (Mus musculus (Mouse)).